The sequence spans 243 residues: Pyridoxine 5'-phosphate synthase (243 aa).

Asparagine 7 contributes to the 3-amino-2-oxopropyl phosphate binding site. Residue 9–10 participates in 1-deoxy-D-xylulose 5-phosphate binding; it reads DH. Arginine 18 is a binding site for 3-amino-2-oxopropyl phosphate. Histidine 43 (proton acceptor) is an active-site residue. Residues arginine 45 and histidine 50 each coordinate 1-deoxy-D-xylulose 5-phosphate. The active-site Proton acceptor is glutamate 70. Residue threonine 100 participates in 1-deoxy-D-xylulose 5-phosphate binding. Catalysis depends on histidine 191, which acts as the Proton donor. 3-amino-2-oxopropyl phosphate-binding positions include glycine 192 and 213 to 214; that span reads GH.

Belongs to the PNP synthase family. Homooctamer; tetramer of dimers.

It is found in the cytoplasm. The catalysed reaction is 3-amino-2-oxopropyl phosphate + 1-deoxy-D-xylulose 5-phosphate = pyridoxine 5'-phosphate + phosphate + 2 H2O + H(+). Its pathway is cofactor biosynthesis; pyridoxine 5'-phosphate biosynthesis; pyridoxine 5'-phosphate from D-erythrose 4-phosphate: step 5/5. Functionally, catalyzes the complicated ring closure reaction between the two acyclic compounds 1-deoxy-D-xylulose-5-phosphate (DXP) and 3-amino-2-oxopropyl phosphate (1-amino-acetone-3-phosphate or AAP) to form pyridoxine 5'-phosphate (PNP) and inorganic phosphate. This chain is Pyridoxine 5'-phosphate synthase, found in Magnetococcus marinus (strain ATCC BAA-1437 / JCM 17883 / MC-1).